Here is a 510-residue protein sequence, read N- to C-terminus: Probable cytosol aminopeptidase (510 aa).

Mn(2+) contacts are provided by Lys-254 and Asp-259. Lys-266 is a catalytic residue. Mn(2+) is bound by residues Asp-277, Asp-336, and Glu-338. Residue Arg-340 is part of the active site. Residues Ala-487–Ala-510 are disordered.

The protein belongs to the peptidase M17 family. The cofactor is Mn(2+).

It is found in the cytoplasm. It catalyses the reaction Release of an N-terminal amino acid, Xaa-|-Yaa-, in which Xaa is preferably Leu, but may be other amino acids including Pro although not Arg or Lys, and Yaa may be Pro. Amino acid amides and methyl esters are also readily hydrolyzed, but rates on arylamides are exceedingly low.. The catalysed reaction is Release of an N-terminal amino acid, preferentially leucine, but not glutamic or aspartic acids.. Functionally, presumably involved in the processing and regular turnover of intracellular proteins. Catalyzes the removal of unsubstituted N-terminal amino acids from various peptides. The sequence is that of Probable cytosol aminopeptidase from Polaromonas naphthalenivorans (strain CJ2).